A 160-amino-acid chain; its full sequence is Ureidoglycolate lyase (160 aa).

The protein belongs to the ureidoglycolate lyase family. As to quaternary structure, homodimer. It depends on Ni(2+) as a cofactor.

The catalysed reaction is (S)-ureidoglycolate = urea + glyoxylate. The protein operates within nitrogen metabolism; (S)-allantoin degradation. Its function is as follows. Catalyzes the catabolism of the allantoin degradation intermediate (S)-ureidoglycolate, generating urea and glyoxylate. Involved in the anaerobic utilization of allantoin as sole nitrogen source. Reinforces the induction of genes involved in the degradation of allantoin and glyoxylate by producing glyoxylate. The polypeptide is Ureidoglycolate lyase (Escherichia coli O127:H6 (strain E2348/69 / EPEC)).